The primary structure comprises 149 residues: MHCPFCSATDTKVIDSRLVSDGHQVRRRRQCLACSERFTTFESAELVMPKVIKSNGNREPFDEDKLSGGLYRSLEKRPVSADLVELALNTIKSKLRATGEREVPSEMIGNFVMDQLKELDKVAYIRFASVYRSFEDIKEFGEEIAKLEK.

A zinc finger spans residues 3–34; the sequence is CPFCSATDTKVIDSRLVSDGHQVRRRRQCLAC. Residues 49–139 form the ATP-cone domain; sequence PKVIKSNGNR…VYRSFEDIKE (91 aa).

It belongs to the NrdR family. Zn(2+) is required as a cofactor.

Its function is as follows. Negatively regulates transcription of bacterial ribonucleotide reductase nrd genes and operons by binding to NrdR-boxes. This is Transcriptional repressor NrdR from Aliivibrio salmonicida (strain LFI1238) (Vibrio salmonicida (strain LFI1238)).